Here is a 106-residue protein sequence, read N- to C-terminus: 1-deoxy-D-xylulose 5-phosphate reductoisomerase (106 aa).

Residue Asp-3 coordinates Mn(2+). 1-deoxy-D-xylulose 5-phosphate-binding residues include Ser-4, Glu-5, Ser-29, His-52, Ser-65, Asn-70, Lys-71, and Glu-74. Glu-5 contributes to the Mn(2+) binding site. Glu-74 is a binding site for Mn(2+).

This sequence belongs to the DXR family. Requires Mn(2+) as cofactor. It depends on Mg(2+) as a cofactor.

The protein localises to the plastid. It is found in the chloroplast stroma. The enzyme catalyses 2-C-methyl-D-erythritol 4-phosphate + NADP(+) = 1-deoxy-D-xylulose 5-phosphate + NADPH + H(+). It participates in isoprenoid biosynthesis; isopentenyl diphosphate biosynthesis via DXP pathway; isopentenyl diphosphate from 1-deoxy-D-xylulose 5-phosphate: step 1/6. Its function is as follows. Enzyme of the plastid non-mevalonate pathway for isoprenoid biosynthesis that catalyzes the NADPH-dependent rearrangement and reduction of 1-deoxy-D-xylulose-5-phosphate (DXP) to 2-C-methyl-D-erythritol 4-phosphate (MEP). Required for chloroplast development. This chain is 1-deoxy-D-xylulose 5-phosphate reductoisomerase, found in Origanum vulgare (Wild marjoram).